Consider the following 194-residue polypeptide: Small ribosomal subunit protein eS7 (194 aa).

Belongs to the eukaryotic ribosomal protein eS7 family.

The chain is Small ribosomal subunit protein eS7 (rps-7) from Caenorhabditis elegans.